The following is a 386-amino-acid chain: Nucleosome assembly protein 1-like 4 (386 aa).

A disordered region spans residues 1–29 (MADNSFSDGVPSDSLEAAKNASNTEKLTD). Ala2 is modified (N-acetylalanine). 3 positions are modified to phosphoserine: Ser5, Ser7, and Ser12. Polar residues predominate over residues 20–29 (NASNTEKLTD). Ser49 is modified (phosphoserine). Thr51 carries the phosphothreonine modification. Phosphoserine occurs at positions 53 and 54. Position 58 is a phosphothreonine (Thr58). Lys105 carries the post-translational modification N6-acetyllysine. Ser125 carries the phosphoserine modification. Residue Lys146 is modified to N6-acetyllysine. A Nuclear localization signal motif is present at residues 265 to 271 (IKKKQKH). Ser304 carries the post-translational modification Phosphoserine. The segment covering 339 to 370 (AIEDDDNFEEGEEGEEEELEGDEEAEDDDDAE) has biased composition (acidic residues). Residues 339–386 (AIEDDDNFEEGEEGEEEELEGDEEAEDDDDAEINPKKEPSQPSECKQQ) form a disordered region.

This sequence belongs to the nucleosome assembly protein (NAP) family. As to quaternary structure, interacts with core (H2A, H2B, H3, H4) and linker (H1) histones. Polyglutamylated and polyglycylated. These 2 modifications occur exclusively on glutamate residues and result in either polyglutamate or polyglycine chains on the gamma-carboxyl group. Both modifications can coexist on the same protein on adjacent residues, and lowering polyglycylation levels increases polyglutamylation, and reciprocally. Polyglutamylated by TTLL4. Post-translationally, phosphorylated at the G0/G1 boundary but it is not phosphorylated in S-phase. Phosphorylated protein remains in the cytoplasm in a complex with histones during the G0/G1 transition, whereas dephosphorylation triggers its transport into the nucleus at the G1/S-boundary.

Its subcellular location is the nucleus. The protein localises to the cytoplasm. Functionally, acts as a histone chaperone in nucleosome assembly. This Bos taurus (Bovine) protein is Nucleosome assembly protein 1-like 4 (NAP1L4).